An 87-amino-acid chain; its full sequence is LYR motif-containing protein 2 (87 aa).

Residues 1–19 (MGSRLPPAALTLKQFLVRQ) constitute a mitochondrion transit peptide.

It belongs to the complex I LYR family.

Its subcellular location is the mitochondrion. Involved in efficient integration of the N-module into mitochondrial respiratory chain complex I. The sequence is that of LYR motif-containing protein 2 (lyrm2) from Xenopus laevis (African clawed frog).